Consider the following 379-residue polypeptide: Dual-specificity RNA methyltransferase RlmN (379 aa).

Catalysis depends on glutamate 95, which acts as the Proton acceptor. The Radical SAM core domain occupies glutamate 101 to aspartate 345. The cysteines at positions 108 and 350 are disulfide-linked. Residues cysteine 115, cysteine 119, and cysteine 122 each coordinate [4Fe-4S] cluster. S-adenosyl-L-methionine-binding positions include glycine 176–glutamate 177, serine 208, serine 230–histidine 232, and asparagine 307. Cysteine 350 (S-methylcysteine intermediate) is an active-site residue.

It belongs to the radical SAM superfamily. RlmN family. [4Fe-4S] cluster is required as a cofactor.

It is found in the cytoplasm. It catalyses the reaction adenosine(2503) in 23S rRNA + 2 reduced [2Fe-2S]-[ferredoxin] + 2 S-adenosyl-L-methionine = 2-methyladenosine(2503) in 23S rRNA + 5'-deoxyadenosine + L-methionine + 2 oxidized [2Fe-2S]-[ferredoxin] + S-adenosyl-L-homocysteine. The enzyme catalyses adenosine(37) in tRNA + 2 reduced [2Fe-2S]-[ferredoxin] + 2 S-adenosyl-L-methionine = 2-methyladenosine(37) in tRNA + 5'-deoxyadenosine + L-methionine + 2 oxidized [2Fe-2S]-[ferredoxin] + S-adenosyl-L-homocysteine. In terms of biological role, specifically methylates position 2 of adenine 2503 in 23S rRNA and position 2 of adenine 37 in tRNAs. m2A2503 modification seems to play a crucial role in the proofreading step occurring at the peptidyl transferase center and thus would serve to optimize ribosomal fidelity. The chain is Dual-specificity RNA methyltransferase RlmN from Burkholderia cenocepacia (strain ATCC BAA-245 / DSM 16553 / LMG 16656 / NCTC 13227 / J2315 / CF5610) (Burkholderia cepacia (strain J2315)).